We begin with the raw amino-acid sequence, 167 residues long: uncharacterized protein (167 aa).

The disordered stretch occupies residues 115 to 167 (SYRSQPQLGFKSTPPAHSSVFHHSVKAPKEDQAQEAASRPLTSQDGWNPNIKK).

This is an uncharacterized protein from Homo sapiens (Human).